A 151-amino-acid polypeptide reads, in one-letter code: Deoxyuridine 5'-triphosphate nucleotidohydrolase (151 aa).

Substrate contacts are provided by residues 70–72, Asn83, 87–89, and Met97; these read RSG and LID.

The protein belongs to the dUTPase family. The cofactor is Mg(2+).

It carries out the reaction dUTP + H2O = dUMP + diphosphate + H(+). Its pathway is pyrimidine metabolism; dUMP biosynthesis; dUMP from dCTP (dUTP route): step 2/2. In terms of biological role, this enzyme is involved in nucleotide metabolism: it produces dUMP, the immediate precursor of thymidine nucleotides and it decreases the intracellular concentration of dUTP so that uracil cannot be incorporated into DNA. The chain is Deoxyuridine 5'-triphosphate nucleotidohydrolase from Mannheimia succiniciproducens (strain KCTC 0769BP / MBEL55E).